Here is a 1013-residue protein sequence, read N- to C-terminus: Ephrin type-A receptor 5 (1013 aa).

An N-terminal signal peptide occupies residues 1 to 31; it reads MGLRGGGGRAGGPAPGWTCLLLCAALRSLLA. Residues 32–549 lie on the Extracellular side of the membrane; that stretch reads SPGSEVNLLD…AASSDQSQIP (518 aa). An Eph LBD domain is found at 36 to 214; that stretch reads EVNLLDSRTV…YYKKCPSVIR (179 aa). N-linked (GlcNAc...) asparagine glycosylation is found at Asn-240, Asn-275, Asn-345, Asn-399, Asn-412, and Asn-437. Fibronectin type-III domains are found at residues 333 to 443 and 444 to 538; these read PPSA…TNQA and APSP…TSPV. A helical transmembrane segment spans residues 550–570; sequence IIVVSVTVGVILLAVVIGFLL. Topologically, residues 571–1013 are cytoplasmic; it reads SGSCCDHGCG…VQLVNGMVPL (443 aa). 2 positions are modified to phosphotyrosine; by autocatalysis: Tyr-626 and Tyr-632. A Protein kinase domain is found at 651–912; it reads ITIERVIGAG…EIVSMLDKLI (262 aa). ATP contacts are provided by residues 657 to 665 and Lys-683; that span reads IGAGEFGEV. The active-site Proton acceptor is the Asp-776. Tyr-809 and Tyr-958 each carry phosphotyrosine; by autocatalysis. An SAM domain is found at 941–1013; it reads GAYRSVGEWL…VQLVNGMVPL (73 aa). Residues 1011-1013 carry the PDZ-binding motif; that stretch reads VPL.

The protein belongs to the protein kinase superfamily. Tyr protein kinase family. Ephrin receptor subfamily. In terms of assembly, heterotetramer upon binding of the ligand. The heterotetramer is composed of an ephrin dimer and a receptor dimer. Oligomerization is probably required to induce biological responses. Post-translationally, phosphorylated. Phosphorylation is stimulated by the ligand EFNA5. Detected in the 10-day embryonic brain, weaker expression in the rest of the 10-day embryo. Undetected in adult tissues.

Its subcellular location is the cell membrane. It localises to the cell projection. It is found in the axon. The protein localises to the dendrite. The enzyme catalyses L-tyrosyl-[protein] + ATP = O-phospho-L-tyrosyl-[protein] + ADP + H(+). Receptor tyrosine kinase which binds promiscuously GPI-anchored ephrin-A family ligands residing on adjacent cells, leading to contact-dependent bidirectional signaling into neighboring cells. The signaling pathway downstream of the receptor is referred to as forward signaling while the signaling pathway downstream of the ephrin ligand is referred to as reverse signaling. Among GPI-anchored ephrin-A ligands, EFNA5 most probably constitutes the cognate/functional ligand for EPHA5. Functions as an axon guidance molecule during development and may be involved in the development of the retinotectal, entorhino-hippocampal and hippocamposeptal pathways. Together with EFNA5 plays also a role in synaptic plasticity in adult brain through regulation of synaptogenesis. This is Ephrin type-A receptor 5 (EPHA5) from Gallus gallus (Chicken).